A 352-amino-acid polypeptide reads, in one-letter code: Ion-translocating oxidoreductase complex subunit D (352 aa).

5 helical membrane-spanning segments follow: residues Ile20–Gly40, Gly42–Leu62, Ala78–Ala109, Pro123–Leu143, and Ile148–Ala168. Thr187 is modified (FMN phosphoryl threonine). 5 consecutive transmembrane segments (helical) span residues Ile214–Leu234, Trp242–Phe262, Leu267–Leu287, Leu301–Pro321, and Asp322–Thr342.

It belongs to the NqrB/RnfD family. The complex is composed of six subunits: RsxA, RsxB, RsxC, RsxD, RsxE and RsxG. The cofactor is FMN.

The protein localises to the cell inner membrane. Its function is as follows. Part of a membrane-bound complex that couples electron transfer with translocation of ions across the membrane. Required to maintain the reduced state of SoxR. The sequence is that of Ion-translocating oxidoreductase complex subunit D from Shigella dysenteriae serotype 1 (strain Sd197).